The primary structure comprises 145 residues: Immunity protein CdiI (145 aa).

Interacts with cognate toxin fragment CdiA-CT.

In terms of biological role, immunity protein component of a toxin-immunity protein module, which functions as a cellular contact-dependent growth inhibition (CDI) system. CDI modules allow bacteria to communicate with and inhibit the growth of closely related neighboring bacteria in a contact-dependent fashion. Protects cells against the 16S rRNase activity of CdiA-CT, its cognate toxin protein, but not against the toxic effects of a similar rRNase, non-cognate CdiA-CT from E.chrysanthemi strain EC16. The polypeptide is Immunity protein CdiI (Enterobacter cloacae subsp. cloacae (strain ATCC 13047 / DSM 30054 / NBRC 13535 / NCTC 10005 / WDCM 00083 / NCDC 279-56)).